The chain runs to 379 residues: Cobalt-precorrin-5B C(1)-methyltransferase (379 aa).

The protein belongs to the CbiD family.

It carries out the reaction Co-precorrin-5B + S-adenosyl-L-methionine = Co-precorrin-6A + S-adenosyl-L-homocysteine. It functions in the pathway cofactor biosynthesis; adenosylcobalamin biosynthesis; cob(II)yrinate a,c-diamide from sirohydrochlorin (anaerobic route): step 6/10. Functionally, catalyzes the methylation of C-1 in cobalt-precorrin-5B to form cobalt-precorrin-6A. The protein is Cobalt-precorrin-5B C(1)-methyltransferase of Salmonella paratyphi B (strain ATCC BAA-1250 / SPB7).